The chain runs to 474 residues: Cysteine--tRNA ligase (474 aa).

Cysteine 27 lines the Zn(2+) pocket. Positions 29–39 (PTVYNYIHIGN) match the 'HIGH' region motif. Zn(2+) contacts are provided by cysteine 212, histidine 237, and glutamate 241. The 'KMSKS' region motif lies at 271-275 (KMSKS). Lysine 274 contributes to the ATP binding site.

The protein belongs to the class-I aminoacyl-tRNA synthetase family. Monomer. The cofactor is Zn(2+).

The protein resides in the cytoplasm. The enzyme catalyses tRNA(Cys) + L-cysteine + ATP = L-cysteinyl-tRNA(Cys) + AMP + diphosphate. In Lactobacillus delbrueckii subsp. bulgaricus (strain ATCC BAA-365 / Lb-18), this protein is Cysteine--tRNA ligase.